A 456-amino-acid chain; its full sequence is Pantothenate kinase 2, mitochondrial (456 aa).

Residues 16–89 (AGRFGAPMER…TSAGRPRAEG (74 aa)) are disordered. 2 stretches are compositionally biased toward low complexity: residues 28–39 (RAAATSAAVGES) and 55–65 (SSAAPSGSGEA). Ser55, Ser56, and Ser75 each carry phosphoserine. A Nuclear export signal motif is present at residues 154 to 161 (LELKDLTL). The active-site Proton acceptor is Glu224. Positions 278, 281, and 293 each coordinate acetyl-CoA.

This sequence belongs to the type II pantothenate kinase family. In terms of assembly, homodimer.

The protein localises to the cytoplasm. It is found in the cytosol. The catalysed reaction is (R)-pantothenate + ATP = (R)-4'-phosphopantothenate + ADP + H(+). It participates in cofactor biosynthesis; coenzyme A biosynthesis; CoA from (R)-pantothenate: step 1/5. Its activity is regulated as follows. Inhibited by acetyl-CoA. Inhibited by calcium hopantenate. Activated by palmitoylcarnitine. In terms of biological role, catalyzes the phosphorylation of pantothenate to generate 4'-phosphopantothenate in the first and rate-determining step of coenzyme A (CoA) synthesis. The polypeptide is Pantothenate kinase 2, mitochondrial (Pank2) (Mus musculus (Mouse)).